Consider the following 489-residue polypeptide: MTFRHCVAVDLGASSGRVMLARYDSKHRTLTLREIHRFVNCLQKTDGFDTWDIDSLEKDIRLGLKKVCNEGILIDSIGIDTWGVDYVLLDKQGQRVGLPVSYRDNRTTGIMPQALVQIGKSEIYRRSGIQFLPFNTIYQLRALTKQQPELTAQVAHALLMPDYFSYRLTGEMNWEYTNATTTQLVNINTDDWDDTLLAWTGAKKSWFGRPSHPGNVIGDWICPQGNRIPVVAVASHDTASAVIASPLANKHSAYLSSGTWSLMGFESKKPYTTDEALAANITNEGGAEGRYRVLKNIMGLWLLQRVLKERRITDLPALIAQTEALPACRFLINPNDDRFINPDDMHAEIQAACRETDQPVPVSDAELARCIFDSLALLYADILHELANLRGEKFTQLHIVGGGCQNALLNQLCADACGIRVMAGPVEASTLGNIGIQLMTLDELNNIDDFRQVVSANYDLTTYIPNPDSEIARHVAQFQPKRQTKELCA.

Residue 13–17 participates in ATP binding; it reads ASSGR. The cysteines at positions 68 and 222 are disulfide-linked. Residues glycine 83 and 236-238 contribute to the substrate site; that span reads HDT. Aspartate 237 functions as the Proton acceptor in the catalytic mechanism. ATP is bound at residue threonine 259. Position 296 (asparagine 296) interacts with substrate. An ATP-binding site is contributed by glutamine 304. Cysteine 353 and cysteine 370 form a disulfide bridge. Glycine 402 contributes to the ATP binding site. Cysteine 413 and cysteine 417 are joined by a disulfide.

Belongs to the rhamnulokinase family. Mg(2+) serves as cofactor.

The catalysed reaction is L-rhamnulose + ATP = L-rhamnulose 1-phosphate + ADP + H(+). Its pathway is carbohydrate degradation; L-rhamnose degradation; glycerone phosphate from L-rhamnose: step 2/3. Involved in the catabolism of L-rhamnose (6-deoxy-L-mannose). Catalyzes the transfer of the gamma-phosphate group from ATP to the 1-hydroxyl group of L-rhamnulose to yield L-rhamnulose 1-phosphate. In Salmonella paratyphi A (strain AKU_12601), this protein is Rhamnulokinase.